Reading from the N-terminus, the 195-residue chain is uncharacterized protein (195 aa).

This is an uncharacterized protein from Bacillus subtilis (strain 168).